Reading from the N-terminus, the 468-residue chain is 6-phosphogluconate dehydrogenase, decarboxylating (468 aa).

NADP(+)-binding positions include 10-15, 33-35, 74-76, and asparagine 102; these read GMAVMG, NRS, and VKA. Substrate is bound by residues asparagine 102 and 128–130; that span reads SGG. Lysine 183 acts as the Proton acceptor in catalysis. 186–187 is a binding site for substrate; the sequence is HN. Residue glutamate 190 is the Proton donor of the active site. Tyrosine 191, lysine 260, arginine 287, arginine 445, and histidine 451 together coordinate substrate.

It belongs to the 6-phosphogluconate dehydrogenase family. As to quaternary structure, homodimer.

It carries out the reaction 6-phospho-D-gluconate + NADP(+) = D-ribulose 5-phosphate + CO2 + NADPH. It participates in carbohydrate degradation; pentose phosphate pathway; D-ribulose 5-phosphate from D-glucose 6-phosphate (oxidative stage): step 3/3. Catalyzes the oxidative decarboxylation of 6-phosphogluconate to ribulose 5-phosphate and CO(2), with concomitant reduction of NADP to NADPH. The sequence is that of 6-phosphogluconate dehydrogenase, decarboxylating (gnd) from Salmonella typhimurium (strain LT2 / SGSC1412 / ATCC 700720).